We begin with the raw amino-acid sequence, 226 residues long: CRISPR-associated protein Cas5 (226 aa).

This sequence belongs to the CRISPR-associated protein Cas5 family. Subtype I-A/Apern subfamily. In terms of assembly, can form a Cascade complex with Csa5, Cas7, Cas3, Cas3' and Cas8a2.

Functionally, CRISPR (clustered regularly interspaced short palindromic repeat) is an adaptive immune system that provides protection against mobile genetic elements (viruses, transposable elements and conjugative plasmids). CRISPR clusters contain spacers, sequences complementary to antecedent mobile elements, and target invading nucleic acids. CRISPR clusters are transcribed and processed into CRISPR RNA (crRNA). This is CRISPR-associated protein Cas5 (cas5a) from Thermoproteus tenax (strain ATCC 35583 / DSM 2078 / JCM 9277 / NBRC 100435 / Kra 1).